Consider the following 326-residue polypeptide: uncharacterized protein (326 aa).

The active-site Proton donor is the Y53. 215 to 225 (SPLAGGLLGGK) is a binding site for NADP(+). Positions 242-305 (IEKHRLQLEK…AVEISLDKEI (64 aa)) form a coiled coil.

Belongs to the aldo/keto reductase family. Aldo/keto reductase 2 subfamily.

This is an uncharacterized protein from Bacillus subtilis (strain 168).